The following is a 160-amino-acid chain: 6,7-dimethyl-8-ribityllumazine synthase (160 aa).

5-amino-6-(D-ribitylamino)uracil is bound by residues F23, 61–63 (SFE), and 85–87 (AVI). 90 to 91 (DT) is a binding site for (2S)-2-hydroxy-3-oxobutyl phosphate. Catalysis depends on H93, which acts as the Proton donor. F118 serves as a coordination point for 5-amino-6-(D-ribitylamino)uracil. R132 provides a ligand contact to (2S)-2-hydroxy-3-oxobutyl phosphate.

It belongs to the DMRL synthase family.

It carries out the reaction (2S)-2-hydroxy-3-oxobutyl phosphate + 5-amino-6-(D-ribitylamino)uracil = 6,7-dimethyl-8-(1-D-ribityl)lumazine + phosphate + 2 H2O + H(+). It functions in the pathway cofactor biosynthesis; riboflavin biosynthesis; riboflavin from 2-hydroxy-3-oxobutyl phosphate and 5-amino-6-(D-ribitylamino)uracil: step 1/2. Catalyzes the formation of 6,7-dimethyl-8-ribityllumazine by condensation of 5-amino-6-(D-ribitylamino)uracil with 3,4-dihydroxy-2-butanone 4-phosphate. This is the penultimate step in the biosynthesis of riboflavin. The sequence is that of 6,7-dimethyl-8-ribityllumazine synthase from Synechococcus sp. (strain CC9605).